The chain runs to 162 residues: Interleukin-15 (162 aa).

Positions 1 to 29 (MRISKPYLRSTSIQCYLCLLLNSHFLAEA) are cleaved as a signal peptide. Residues 30–48 (GIHVFIFGCISAGLPKTEA) constitute a propeptide that is removed on maturation. 2 disulfides stabilise this stretch: Cys-83/Cys-133 and Cys-90/Cys-136. Residues Asn-108, Asn-119, Asn-127, and Asn-143 are each glycosylated (N-linked (GlcNAc...) asparagine).

This sequence belongs to the IL-15/IL-21 family. As to expression, expressed in many tissues including heart, spleen, lung, liver, muscle and kidney (at mRNA level). Expressed in many tissues including heart, spleen, lung, liver, muscle and kidney (at protein level).

It localises to the secreted. In terms of biological role, cytokine that plays a major role in the development of inflammatory and protective immune responses to microbial invaders and parasites by modulating immune cells of both the innate and adaptive immune systems. Stimulates the proliferation of natural killer cells, T-cells and B-cells and promotes the secretion of several cytokines. In monocytes, induces the production of IL8 and monocyte chemotactic protein 1/CCL2, two chemokines that attract neutrophils and monocytes respectively to sites of infection. Unlike most cytokines, which are secreted in soluble form, IL15 is expressed in association with its high affinity IL15RA on the surface of IL15-producing cells and delivers signals to target cells that express IL2RB and IL2RG receptor subunits. Binding to its receptor triggers the phosphorylation of JAK1 and JAK3 and the recruitment and subsequent phosphorylation of signal transducer and activator of transcription-3/STAT3 and STAT5. In mast cells, induces the rapid tyrosine phosphorylation of STAT6 and thereby controls mast cell survival and release of cytokines such as IL4. This is Interleukin-15 (IL15) from Oryctolagus cuniculus (Rabbit).